The primary structure comprises 348 residues: Outer membrane protein A (348 aa).

Residues 1-21 form the signal peptide; sequence MKKTAIAIAVALAGFATVAQA. The next 8 beta stranded transmembrane spans lie at 27–37, 55–66, 70–78, 96–107, 112–120, 146–155, 160–167, and 186–194; these read TWYTGAKLGWS, QLGAGAFGGYQV, VGFEMGYDW, QGVQLTAKLGYP, LDIYTRLGG, PVFAGGVEYA, IATRLEYQ, and LLSLGVSYR. The segment at 201–210 is hinge-like; that stretch reads APVVAPAPAP. 3 tandem repeats follow at residues 205–206, 207–208, and 209–210. Positions 205 to 210 are 3 X 2 AA tandem repeats of A-P; it reads APAPAP. Positions 212–340 constitute an OmpA-like domain; sequence VQTKHFTLKS…RVEIEVKGIK (129 aa). A disulfide bond links cysteine 313 and cysteine 325.

This sequence belongs to the outer membrane OOP (TC 1.B.6) superfamily. OmpA family. As to quaternary structure, monomer and homodimer. In terms of assembly, (Microbial infection) Upon infection with phage Sf6 associates with the mature bacteriophage capsid. Was originally suggested to be within the bacteriophage capsid. This has been disproven.

Its subcellular location is the extracellular vesicle. It localises to the cell outer membrane. Functionally, with TolR probably plays a role in maintaining the position of the peptidoglycan cell wall in the periplasm. Acts as a porin with low permeability that allows slow penetration of small solutes; an internal gate slows down solute passage. Its function is as follows. Required for conjugation with F-type plasmids; probably serves as the mating receptor on recipient cells. (Microbial infection) Serves as a secondary receptor during phage Sf6 infection; infection requires both lipopolysaccharide (LPS) and the OmpA beta-barrel. The chain is Outer membrane protein A from Shigella flexneri.